A 208-amino-acid polypeptide reads, in one-letter code: Small ribosomal subunit protein uS5 (208 aa).

Residues 1–15 (MTDSNNQSPNKKTSG) show a composition bias toward polar residues. Residues 1 to 54 (MTDSNNQSPNKKTSGSSSAPPAADGRQENRRSRGEKRGGRRDRRGQERDSEWQE) are disordered. Composition is skewed to basic and acidic residues over residues 25–37 (GRQE…GEKR) and 44–54 (RGQERDSEWQE). The 64-residue stretch at 52–115 (WQERVVQIRR…ADGKKHLVRV (64 aa)) folds into the S5 DRBM domain.

Belongs to the universal ribosomal protein uS5 family. Part of the 30S ribosomal subunit. Contacts proteins S4 and S8.

Its function is as follows. With S4 and S12 plays an important role in translational accuracy. Located at the back of the 30S subunit body where it stabilizes the conformation of the head with respect to the body. The protein is Small ribosomal subunit protein uS5 of Prochlorococcus marinus (strain NATL2A).